A 1020-amino-acid polypeptide reads, in one-letter code: 5'-3' exoribonuclease 3 (1020 aa).

The segment at 113-144 (QQRSRRFRSAKDASDAAAEEERLREEFEREGR) is disordered. Basic and acidic residues predominate over residues 121–144 (SAKDASDAAAEEERLREEFEREGR). The CCHC-type zinc-finger motif lies at 262–279 (ERCFLCGQMGHFASNCEG). Disordered regions lie at residues 411–440 (QHQRQAERVKRDKAGKATKRMDDEAPTVQP) and 452–483 (RLASAPTPSPFQSNDGRSAPHQKVRRLSPGSS). Basic and acidic residues predominate over residues 414–433 (RQAERVKRDKAGKATKRMDD). A coiled-coil region spans residues 487–523 (AIVDVENSLESDERENKEELKTKLKELIREKSDAFNS). Over residues 831–844 (NNHGMHNNHGMHNN) the composition is skewed to low complexity. Disordered regions lie at residues 831 to 859 (NNHGMHNNHGMHNNQGRQNPPGSVSGRHL), 875 to 897 (TDRYQTPTDVPAPGYGYNPPQYV), and 911 to 1020 (PGAQ…RHRY). 2 stretches are compositionally biased toward low complexity: residues 911 to 923 (PGAQGYAQPAPYQ) and 960 to 972 (GNHQNQHQQQQWH). Residues 1000–1020 (RGRGRGSHHHHDQGGNPRHRY) are compositionally biased toward basic residues.

This sequence belongs to the 5'-3' exonuclease family. XRN2/RAT1 subfamily. As to expression, expressed in roots, leaves, stems and flowers.

Its subcellular location is the nucleus. Possesses 5'-&gt;3' exoribonuclease activity. Acts as an endogenous post-transcriptional gene silencing (PTGS) suppressor. Degrades miRNA-derived loops, excised during miRNA maturation in the nucleus. Required for proper development. Involved in pre-rRNA processing. Involved with XRN2 in the 5'-end exonucleolytic processing of 5.8S and 25S rRNAs. Contributes with XRN2 to polyadenylation-dependent nuclear RNA surveillance. Involved in the degradation of aberrant polyadenylated pre-rRNA through 5'-end processing. The polypeptide is 5'-3' exoribonuclease 3 (Arabidopsis thaliana (Mouse-ear cress)).